The primary structure comprises 834 residues: WW domain-containing adapter protein with coiled-coil homolog (834 aa).

Disordered stretches follow at residues 1 to 247, 268 to 411, and 430 to 504; these read MVMH…WSEH, KPKE…SVAT, and VTGA…GAKG. Over residues 22–31 the composition is skewed to low complexity; the sequence is HTSYQSSKYS. Positions 33 to 50 are enriched in basic and acidic residues; it reads SKRDYERDRSSNYRDRDL. Residues 53–77 show a composition bias toward gly residues; sequence GAGGGGGGGSAGGGGGGSGNGGGPL. Positions 96–108 are enriched in basic and acidic residues; that stretch reads RSHDLRDRSDHRG. Over residues 109–119 the composition is skewed to gly residues; that stretch reads GGGGNGRGGSG. Basic and acidic residues-rich tracts occupy residues 127–168, 181–246, and 268–303; these read KMRD…DRRG, SSRE…DWSE, and KPKEWVDRERNLPRDQHREKDYRDKDRDRDRDDRFS. The WW domain occupies 244-271; it reads WSEHVSSSGKMYYYNCKTEISQWEKPKE. 2 stretches are compositionally biased toward polar residues: residues 304–314 and 350–363; these read RSTYKHSNSSR and GDSTPTSEASYSLS. A compositionally biased stretch (gly residues) spans 369 to 384; that stretch reads HGGGPGGGGPGGGGGS. Composition is skewed to low complexity over residues 402–411 and 431–466; these read TANSSASVAT and TGATMLPTMSGMLNSNSSNSAGGSSSNASSSSLRNS. Over residues 472-496 the composition is skewed to polar residues; the sequence is GSTSGTTVPTLGSQDPHQHHLNSNA.

As to expression, expressed in adult head and thorax and in larval central nervous system and fat body.

The protein localises to the nucleus. It is found in the lysosome. In terms of biological role, acts as a linker between gene transcription and histone H2B monoubiquitination at 'Lys-118'. Regulates the cell-cycle checkpoint activation in response to DNA damage. Positive regulator of amino acid starvation-induced autophagy. Also acts as a negative regulator of basal autophagy. Positively regulates mTor activity. Promotes, in an energy-dependent manner, the assembly of the TTT complex and the RUVBL complex composed of pont and rept into the TTT-RUVBL complex. This leads to dimerization of the mTORC1 complex and its subsequent activation. May negatively regulate the ubiquitin proteasome pathway. Required for habituation, a form of non-associative learning. The protein is WW domain-containing adapter protein with coiled-coil homolog of Drosophila melanogaster (Fruit fly).